A 320-amino-acid polypeptide reads, in one-letter code: MEMRNTTPDFILLGLFNHTRAHQVLFMMLLATVLTSLFSNALMILLIHWDHRLHRPMYFLLSQLSLMDMMLVSTTVPKMAADYLTGNKAISRAGCGVQIFFLPTLGGGECFLLAAMAYDRYAAVCHPLRYPTLMSWQLCLRMTMSSWLLGAADGLLQAVATLSFPYCGAHEIDHFFCEAPVLVRLACADTSVFENAMYICCVLMLLVPFSLILSSYGLILAAVLLMRSTEARKKAFATCSSHVAVVGLFYGAGIFTYMRPKSHRSTNHDKVVSAFYTMFTPLLNPLIYSVRNSEVKEALKRWLGTCVNLKHQQNEAHRSR.

The Extracellular portion of the chain corresponds to Met-1–Gln-23. N-linked (GlcNAc...) asparagine glycosylation occurs at Asn-17. Residues Val-24–Ile-47 traverse the membrane as a helical segment. Over His-48–Arg-55 the chain is Cytoplasmic. The helical transmembrane segment at Pro-56 to Pro-77 threads the bilayer. Over Lys-78–Gln-98 the chain is Extracellular. The cysteines at positions 95 and 187 are disulfide-linked. Residues Ile-99–Tyr-118 traverse the membrane as a helical segment. At Asp-119–Gln-137 the chain is on the cytoplasmic side. A helical transmembrane segment spans residues Leu-138 to Leu-156. The Extracellular segment spans residues Gln-157–Phe-193. Residues Glu-194 to Gly-217 traverse the membrane as a helical segment. At Leu-218–Lys-234 the chain is on the cytoplasmic side. A helical membrane pass occupies residues Ala-235 to Tyr-257. The Extracellular portion of the chain corresponds to Met-258 to Lys-270. A helical membrane pass occupies residues Val-271–Val-290. Residues Arg-291–Arg-320 are Cytoplasmic-facing.

Belongs to the G-protein coupled receptor 1 family.

It is found in the cell membrane. In terms of biological role, odorant receptor. The protein is Olfactory receptor 2T12 (OR2T12) of Homo sapiens (Human).